Here is a 351-residue protein sequence, read N- to C-terminus: Cytochrome c biogenesis protein CcsA (351 aa).

Transmembrane regions (helical) follow at residues 17–37 (VLFL…LPAI), 38–58 (NALG…LLGA), 68–88 (LSNL…VHLI), 97–117 (LVGV…TLTL), 143–163 (MMLS…FLVI), 259–279 (IIGL…VWAN), 286–306 (WSWD…AAYL), and 320–340 (AILA…VNLL).

The protein belongs to the CcmF/CycK/Ccl1/NrfE/CcsA family. As to quaternary structure, may interact with ccs1.

It localises to the cellular thylakoid membrane. Its function is as follows. Required during biogenesis of c-type cytochromes (cytochrome c6 and cytochrome f) at the step of heme attachment. The chain is Cytochrome c biogenesis protein CcsA from Trichormus variabilis (strain ATCC 29413 / PCC 7937) (Anabaena variabilis).